The following is a 332-amino-acid chain: MHHVADWKKEKVAELEDLTNSHEIIGIVNLADIPAKQLQTMRKSLGDNAILKMSRKNFIKIALENSDKEEVEGLADYLEGQPAMVFTKMNPFKLFKILEDSKTEAPAKAGSIAPADIVVPAGDTSFPPGPILGELQQVGIPAKIDKGSIVVTDDAKIVDEGEEIPKAVADILTKLEIHPMEVGIDLLAVCEGDTIYTADVLAIDEEETIQTLANAYQSAINLSVYAGILNSESAPLLIQKAARDALNLAINANILTSETTDKILSKAYAQMLAVAKLLSSEAIDDELNEKLNSQAAAAPVAVEDNTEEPEEEEEEEEDAAESAAAGLGALFG.

The interval 294–332 (QAAAAPVAVEDNTEEPEEEEEEEEDAAESAAAGLGALFG) is disordered. The span at 304–320 (DNTEEPEEEEEEEEDAA) shows a compositional bias: acidic residues.

The protein belongs to the universal ribosomal protein uL10 family. In terms of assembly, part of the 50S ribosomal subunit. Forms part of the ribosomal stalk which helps the ribosome interact with GTP-bound translation factors. Forms a heptameric L10(L12)2(L12)2(L12)2 complex, where L10 forms an elongated spine to which the L12 dimers bind in a sequential fashion.

Its function is as follows. Forms part of the ribosomal stalk, playing a central role in the interaction of the ribosome with GTP-bound translation factors. The sequence is that of Large ribosomal subunit protein uL10 from Methanosphaera stadtmanae (strain ATCC 43021 / DSM 3091 / JCM 11832 / MCB-3).